The sequence spans 648 residues: 1-deoxy-D-xylulose-5-phosphate synthase (648 aa).

Thiamine diphosphate is bound by residues H72 and 113–115; that span reads GHA. Position 144 (D144) interacts with Mg(2+). Thiamine diphosphate contacts are provided by residues 145-146, N173, and E363; that span reads GA. N173 contacts Mg(2+).

This sequence belongs to the transketolase family. DXPS subfamily. In terms of assembly, homodimer. It depends on Mg(2+) as a cofactor. Requires thiamine diphosphate as cofactor.

It catalyses the reaction D-glyceraldehyde 3-phosphate + pyruvate + H(+) = 1-deoxy-D-xylulose 5-phosphate + CO2. It functions in the pathway metabolic intermediate biosynthesis; 1-deoxy-D-xylulose 5-phosphate biosynthesis; 1-deoxy-D-xylulose 5-phosphate from D-glyceraldehyde 3-phosphate and pyruvate: step 1/1. Functionally, catalyzes the acyloin condensation reaction between C atoms 2 and 3 of pyruvate and glyceraldehyde 3-phosphate to yield 1-deoxy-D-xylulose-5-phosphate (DXP). The chain is 1-deoxy-D-xylulose-5-phosphate synthase from Symbiobacterium thermophilum (strain DSM 24528 / JCM 14929 / IAM 14863 / T).